The following is a 209-amino-acid chain: Probable glutathione peroxidase 8 (209 aa).

Met1 carries the post-translational modification N-acetylmethionine. A helical transmembrane segment spans residues 18-40; sequence VFAVLLSIVLCTVTLFLLQLKFL. The active site involves Cys79.

This sequence belongs to the glutathione peroxidase family.

The protein resides in the membrane. It catalyses the reaction 2 glutathione + H2O2 = glutathione disulfide + 2 H2O. This chain is Probable glutathione peroxidase 8 (GPX8), found in Homo sapiens (Human).